We begin with the raw amino-acid sequence, 130 residues long: Small ribosomal subunit protein uS9 (130 aa).

Residues 105–115 (TRDSRQVERKK) show a composition bias toward basic and acidic residues. The tract at residues 105-130 (TRDSRQVERKKVGFRKSRKRTQFSKR) is disordered. Positions 116 to 130 (VGFRKSRKRTQFSKR) are enriched in basic residues.

The protein belongs to the universal ribosomal protein uS9 family.

The sequence is that of Small ribosomal subunit protein uS9 from Buchnera aphidicola subsp. Schizaphis graminum (strain Sg).